The chain runs to 362 residues: sn-glycerol-3-phosphate import ATP-binding protein UgpC (362 aa).

The ABC transporter domain maps to 4 to 235 (LSFRNVKKTY…PASTFVAGFI (232 aa)). 37-44 (GPSGCGKS) contributes to the ATP binding site.

It belongs to the ABC transporter superfamily. sn-glycerol-3-phosphate importer (TC 3.A.1.1.3) family. As to quaternary structure, the complex is composed of two ATP-binding proteins (UgpC), two transmembrane proteins (UgpA and UgpE) and a solute-binding protein (UgpB).

It localises to the cell inner membrane. The catalysed reaction is sn-glycerol 3-phosphate(out) + ATP + H2O = sn-glycerol 3-phosphate(in) + ADP + phosphate + H(+). Part of the ABC transporter complex UgpBAEC involved in sn-glycerol-3-phosphate (G3P) import. Responsible for energy coupling to the transport system. This chain is sn-glycerol-3-phosphate import ATP-binding protein UgpC, found in Bordetella parapertussis (strain 12822 / ATCC BAA-587 / NCTC 13253).